The following is a 151-amino-acid chain: Small ribosomal subunit protein uS19 (151 aa).

It belongs to the universal ribosomal protein uS19 family.

Functionally, protein S19 forms a complex with S13 that binds strongly to the 16S ribosomal RNA. In Picrophilus torridus (strain ATCC 700027 / DSM 9790 / JCM 10055 / NBRC 100828 / KAW 2/3), this protein is Small ribosomal subunit protein uS19.